Here is a 406-residue protein sequence, read N- to C-terminus: 2,3-bisphosphoglycerate-independent phosphoglycerate mutase (406 aa).

Basic and acidic residues predominate over residues 156 to 165 (ITEGDPHKEG). The disordered stretch occupies residues 156–177 (ITEGDPHKEGVPIPEVKPLDNS).

This sequence belongs to the BPG-independent phosphoglycerate mutase family. A-PGAM subfamily.

The enzyme catalyses (2R)-2-phosphoglycerate = (2R)-3-phosphoglycerate. The protein operates within carbohydrate degradation; glycolysis; pyruvate from D-glyceraldehyde 3-phosphate: step 3/5. Functionally, catalyzes the interconversion of 2-phosphoglycerate and 3-phosphoglycerate. The polypeptide is 2,3-bisphosphoglycerate-independent phosphoglycerate mutase (Methanococcus aeolicus (strain ATCC BAA-1280 / DSM 17508 / OCM 812 / Nankai-3)).